A 560-amino-acid polypeptide reads, in one-letter code: MTPALNSLSQRIAARLSSSQRDDHYLHNDFHALASAALDMEKRFDKAEKIPLPPQKMRLAALRRLRLAQELTEREWRMVFYGLADNDPSYPDQPVLLEDDTFFPEVNNAIKKRLETKTLKRRDWAALCSSYFAYQNPSPETNPHWCVLRGHIAQGYMVVKAAIRREKSWMKTIEFYHDIFTPQAGGVISRQLLAGESNSLSSLEKIAQIPDSSWLWKRIFTVLLAQLDTLDDPQFLDKISWLLGLAAQWVRFRDDIMTATLTRYYHSIYRDQAHSALKQAALEYWDNPQLKSQQNKWHQYVSEPVAAMVRGWLAKQDLMHFFELLRGNGDVDQARLHYWLRFANQMGFTRIVMGTDAWQDRGSDFVKFREENKGRLSYLRGGRNFDNAMIMQINDYLFVEFSGTGNAMYAYRIGHAPFNPESRTLDINIHLKDKGRCVLRLPHTPRAEGYNKVRITGWMLKYDDELRQLGIRWMAEEAIKFVDKKASSPASMSDIKIINPLRDTAIQHLVEGSSCIVSDNRQKGGVLSVQLNTPDDTIERELLRLGFAPVAKEPHRYWIK.

In terms of biological role, component of antiviral defense system Zorya type I, composed of ZorA, ZorB, ZorC and ZorD. Expression of Zorya type I in E.coli (strain MG1655) confers 10,000-fold resistance to phage SECphi27, 100-fold resistance to lambda, and 10-fold resistance to T7. While most T7 infected Zorya-containing cells undergo abortive infection, a minority produce viable phage progeny. These eventually accumulate to a high multiplicity of infection, leading to culture collapse by 2 hours after initial infection. ZorA and ZorB probably assemble in the cell inner membrane and exert their effect there. The chain is Zorya protein ZorC from Escherichia coli O139:H28 (strain E24377A / ETEC).